Reading from the N-terminus, the 206-residue chain is Putative archaetidylserine decarboxylase proenzyme (206 aa).

Ser-172 acts as the Schiff-base intermediate with substrate; via pyruvic acid in catalysis. Ser-172 carries the pyruvic acid (Ser); by autocatalysis modification.

It belongs to the phosphatidylserine decarboxylase family. PSD-A subfamily. Heterodimer of a large membrane-associated beta subunit and a small pyruvoyl-containing alpha subunit. Pyruvate serves as cofactor. Is synthesized initially as an inactive proenzyme. Formation of the active enzyme involves a self-maturation process in which the active site pyruvoyl group is generated from an internal serine residue via an autocatalytic post-translational modification. Two non-identical subunits are generated from the proenzyme in this reaction, and the pyruvate is formed at the N-terminus of the alpha chain, which is derived from the carboxyl end of the proenzyme. The post-translation cleavage follows an unusual pathway, termed non-hydrolytic serinolysis, in which the side chain hydroxyl group of the serine supplies its oxygen atom to form the C-terminus of the beta chain, while the remainder of the serine residue undergoes an oxidative deamination to produce ammonia and the pyruvoyl prosthetic group on the alpha chain.

It localises to the cell membrane. It carries out the reaction archaetidylserine + H(+) = archaetidylethanolamine + CO2. Its function is as follows. Catalyzes the formation of archaetidylethanolamine (PtdEtn) from archaetidylserine (PtdSer). The polypeptide is Putative archaetidylserine decarboxylase proenzyme (Methanocaldococcus jannaschii (strain ATCC 43067 / DSM 2661 / JAL-1 / JCM 10045 / NBRC 100440) (Methanococcus jannaschii)).